Reading from the N-terminus, the 478-residue chain is Putative multidrug resistance outer membrane protein MdtQ (478 aa).

An N-terminal signal peptide occupies residues 1–21 (MNRDSFYPAIACFPLLLMLAG). Residue Cys22 is the site of N-palmitoyl cysteine attachment. A lipid anchor (S-diacylglycerol cysteine) is attached at Cys22.

It belongs to the outer membrane factor (OMF) (TC 1.B.17) family.

It is found in the cell outer membrane. Its function is as follows. Could be involved in resistance to puromycin, acriflavine and tetraphenylarsonium chloride. This chain is Putative multidrug resistance outer membrane protein MdtQ (mdtQ), found in Shigella flexneri.